Here is a 186-residue protein sequence, read N- to C-terminus: Tumor necrosis factor alpha-induced protein 8-like protein 1 (186 aa).

Belongs to the TNFAIP8 family. Interacts with FBXW5; TNFAIP8L1 competes with TSC2 to bind FBXW5 increasing TSC2 stability by preventing its ubiquitination.

It localises to the cytoplasm. Its function is as follows. Acts as a negative regulator of mTOR activity. This Bos taurus (Bovine) protein is Tumor necrosis factor alpha-induced protein 8-like protein 1 (TNFAIP8L1).